Here is a 1043-residue protein sequence, read N- to C-terminus: NACHT, LRR and PYD domains-containing protein 13 (1043 aa).

One can recognise a Pyrin domain in the interval 1–107 (MNFSVITCPN…CEKVRAEMKE (107 aa)). Residues 229-558 (QTIVLVGRAG…VLEEPREFPP (330 aa)) form the NACHT domain. ATP is bound at residue 235–242 (GRAGVGKT). LRR repeat units follow at residues 725–749 (NENL…LCLA), 781–804 (NSKL…ILKA), 837–864 (IQHV…ALTH), 894–917 (NRSL…FLCE), 923–946 (DGNL…ELAN), 951–978 (NHNV…ALKP), and 1007–1030 (SKSL…MLCK).

Belongs to the NLRP family.

Functionally, involved in inflammation. In Homo sapiens (Human), this protein is NACHT, LRR and PYD domains-containing protein 13 (NLRP13).